The primary structure comprises 196 residues: NADH-quinone oxidoreductase subunit B (196 aa).

Residues Cys63, Cys64, Cys129, and Cys159 each coordinate [4Fe-4S] cluster.

This sequence belongs to the complex I 20 kDa subunit family. NDH-1 is composed of 14 different subunits. Subunits NuoB, C, D, E, F, and G constitute the peripheral sector of the complex. Requires [4Fe-4S] cluster as cofactor.

It is found in the cell inner membrane. It catalyses the reaction a quinone + NADH + 5 H(+)(in) = a quinol + NAD(+) + 4 H(+)(out). NDH-1 shuttles electrons from NADH, via FMN and iron-sulfur (Fe-S) centers, to quinones in the respiratory chain. The immediate electron acceptor for the enzyme in this species is believed to be a menaquinone. Couples the redox reaction to proton translocation (for every two electrons transferred, four hydrogen ions are translocated across the cytoplasmic membrane), and thus conserves the redox energy in a proton gradient. This is NADH-quinone oxidoreductase subunit B from Bacteroides fragilis (strain ATCC 25285 / DSM 2151 / CCUG 4856 / JCM 11019 / LMG 10263 / NCTC 9343 / Onslow / VPI 2553 / EN-2).